Here is a 284-residue protein sequence, read N- to C-terminus: Formamidopyrimidine-DNA glycosylase (284 aa).

The active-site Schiff-base intermediate with DNA is the Pro-2. Glu-3 acts as the Proton donor in catalysis. The Proton donor; for beta-elimination activity role is filled by Lys-61. His-95, Arg-114, and Arg-159 together coordinate DNA. Residues 244 to 278 (WVYGRKGQPCRVCNTPIERIRLAGRSTHFCPTCQR) form an FPG-type zinc finger. The active-site Proton donor; for delta-elimination activity is the Arg-268.

It belongs to the FPG family. In terms of assembly, monomer. Zn(2+) serves as cofactor.

The catalysed reaction is Hydrolysis of DNA containing ring-opened 7-methylguanine residues, releasing 2,6-diamino-4-hydroxy-5-(N-methyl)formamidopyrimidine.. It carries out the reaction 2'-deoxyribonucleotide-(2'-deoxyribose 5'-phosphate)-2'-deoxyribonucleotide-DNA = a 3'-end 2'-deoxyribonucleotide-(2,3-dehydro-2,3-deoxyribose 5'-phosphate)-DNA + a 5'-end 5'-phospho-2'-deoxyribonucleoside-DNA + H(+). Involved in base excision repair of DNA damaged by oxidation or by mutagenic agents. Acts as a DNA glycosylase that recognizes and removes damaged bases. Has a preference for oxidized purines, such as 7,8-dihydro-8-oxoguanine (8-oxoG). Has AP (apurinic/apyrimidinic) lyase activity and introduces nicks in the DNA strand. Cleaves the DNA backbone by beta-delta elimination to generate a single-strand break at the site of the removed base with both 3'- and 5'-phosphates. In Gloeobacter violaceus (strain ATCC 29082 / PCC 7421), this protein is Formamidopyrimidine-DNA glycosylase.